A 521-amino-acid polypeptide reads, in one-letter code: Peroxisomal membrane protein PEX23 (521 aa).

Positions 1–26 (MPTDPNSNPVSKAGLTPSSINSNISE) are disordered. 2 N-linked (GlcNAc...) asparagine glycosylation sites follow: asparagine 23 and asparagine 53. Helical transmembrane passes span 111 to 128 (SYIS…ILYF) and 133 to 150 (IYLG…YSIF). A glycan (N-linked (GlcNAc...) asparagine) is linked at asparagine 189. The helical transmembrane segment at 198–217 (LLFTSIFLSPGYILVCYLLF) threads the bilayer. A glycan (N-linked (GlcNAc...) asparagine) is linked at asparagine 279. The tract at residues 425–446 (VSPGDDSSTDSASLPHSASETV) is disordered. Positions 429–446 (DDSSTDSASLPHSASETV) are enriched in polar residues. 2 N-linked (GlcNAc...) asparagine glycosylation sites follow: asparagine 463 and asparagine 467. Residues 465–486 (SGNITTSAETAPDSAGTAKKRK) are disordered.

This sequence belongs to the PEX28-32 family. PEX32 subfamily.

It is found in the endoplasmic reticulum membrane. Functionally, with PEX29, contributes to the formation of endoplasmic reticulum-mitochondria junctions which are important for mitochondrial function. Involved in lipid dropplets formation. The sequence is that of Peroxisomal membrane protein PEX23 from Ogataea parapolymorpha (strain ATCC 26012 / BCRC 20466 / JCM 22074 / NRRL Y-7560 / DL-1) (Yeast).